A 141-amino-acid polypeptide reads, in one-letter code: Protein MGF 100-2L (141 aa).

This sequence belongs to the asfivirus MGF 100 family.

Its function is as follows. Plays a role in virus cell tropism, and may be required for efficient virus replication in macrophages. In African swine fever virus (isolate Tick/Malawi/Lil 20-1/1983) (ASFV), this protein is Protein MGF 100-2L.